The sequence spans 712 residues: Aryl hydrocarbon receptor nuclear translocator 2 (712 aa).

Residues 36–73 (AGAMPARGGKRRSGMDFDDEDGEGPSKFSRENHSEIER) are disordered. Omega-N-methylarginine is present on Arg42. Basic and acidic residues predominate over residues 63–73 (FSRENHSEIER). The region spanning 63–116 (FSRENHSEIERRRRNKMTQYITELSDMVPTCSALARKPDKLTILRMAVSHMKSM) is the bHLH domain. PAS domains follow at residues 134–209 (TEQE…MTGR) and 323–393 (PVCM…VKLK). In terms of domain architecture, PAC spans 398 to 441 (SVMYRFRTKNREWLLIRTSSFTFQNPYSDEIEYVICTNTNVKQL). The interval 573–712 (AWTGSRPPFP…DLGMFPPFSE (140 aa)) is disordered. Low complexity-rich tracts occupy residues 597 to 626 (SSHP…AYPS) and 653 to 675 (SQWQ…QPGQ).

In terms of assembly, efficient DNA binding requires dimerization with another bHLH protein. Heterodimer with NPAS4 or SIM1. Heterodimer with the aryl hydrocarbon receptor (AHR) or the SIM1 protein. Interacts with TACC3. In terms of tissue distribution, restricted to adult brain and kidney.

It is found in the nucleus. Transcription factor that plays a role in the development of the hypothalamo-pituitary axis, postnatal brain growth, and visual and renal function. Specifically recognizes the xenobiotic response element (XRE). This is Aryl hydrocarbon receptor nuclear translocator 2 (Arnt2) from Mus musculus (Mouse).